Here is a 193-residue protein sequence, read N- to C-terminus: Ion-translocating oxidoreductase complex subunit A (193 aa).

6 helical membrane-spanning segments follow: residues 5 to 25 (LLLFVGTVLVNNFVLVKFLGL), 39 to 59 (MGMGLATTFVMTLASICAWLI), 63 to 83 (ILIPLNLIYLRTLAFILVIAV), 102 to 122 (LLGIFLPLITTNCAVLGVALL), 134 to 154 (ALYGFSAAVGFSLVMVLFAAI), and 171 to 191 (AIALITAGLMSLAFMGFSGLV).

This sequence belongs to the NqrDE/RnfAE family. As to quaternary structure, the complex is composed of six subunits: RsxA, RsxB, RsxC, RsxD, RsxE and RsxG.

Its subcellular location is the cell inner membrane. Part of a membrane-bound complex that couples electron transfer with translocation of ions across the membrane. Required to maintain the reduced state of SoxR. The polypeptide is Ion-translocating oxidoreductase complex subunit A (Shigella boydii serotype 18 (strain CDC 3083-94 / BS512)).